We begin with the raw amino-acid sequence, 737 residues long: Protein penguin (737 aa).

Residues 1 to 128 (MVSSEPKGPA…EKKDLKLKRK (128 aa)) are disordered. 2 stretches are compositionally biased toward basic and acidic residues: residues 76 to 89 (KKFD…DKRL) and 107 to 122 (EGEK…EKKD). In terms of domain architecture, PUM-HD spans 139–490 (EANQIHEKLR…EILEQIEAPI (352 aa)). Pumilio repeat units lie at residues 167-202 (NVGD…EISE), 203-238 (KLLP…KLVD), 239-274 (SLYG…YMRQ), 388-425 (NIKE…AIYD), and 426-462 (HLHG…EFIR). The tract at residues 577–638 (VESSSDDEDE…EEEPAAPLVS (62 aa)) is disordered. Positions 580–600 (SSDDEDEDEDEDEESDDEGDE) are enriched in acidic residues. A compositionally biased stretch (basic and acidic residues) spans 601–615 (KEQKEAAADDAEPKV). The span at 616-626 (KKAKKEPKKPK) shows a compositional bias: basic residues.

The protein is Protein penguin of Drosophila melanogaster (Fruit fly).